Consider the following 930-residue polypeptide: G patch domain-containing protein 1 (930 aa).

The span at Met1–Leu12 shows a compositional bias: acidic residues. Disordered regions lie at residues Met1–Asp41 and Gly170–Asp209. N-acetylalanine is present on Ala2. Phosphoserine is present on residues Ser6 and Ser8. The G-patch domain occupies Lys152–Gly198. Residue Lys313 forms a Glycyl lysine isopeptide (Lys-Gly) (interchain with G-Cter in SUMO2) linkage. At Ser358 the chain carries Phosphoserine. 4 disordered regions span residues Gly400–Gly420, Ser465–Ser486, Ser566–Ser596, and Pro654–Gln930. The span at Ser465–Ser478 shows a compositional bias: low complexity. Basic and acidic residues-rich tracts occupy residues Glu582–Asp593 and Gly674–Ser695. The residue at position 715 (Ser715) is a Phosphoserine. The span at Ser719–Val737 shows a compositional bias: basic and acidic residues. Residues Ser768–Asp777 are compositionally biased toward acidic residues. The span at Lys851–Asn886 shows a compositional bias: basic residues. The segment covering Ser894–Ser903 has biased composition (low complexity). Basic residues predominate over residues Arg921–Gln930.

Belongs to the GPATCH1 family.

The protein is G patch domain-containing protein 1 (Gpatch1) of Mus musculus (Mouse).